Here is a 447-residue protein sequence, read N- to C-terminus: UDP-N-acetylglucosamine 1-carboxyvinyltransferase (447 aa).

Position 27–28 (Lys-27–Asn-28) interacts with phosphoenolpyruvate. Arg-97 is a binding site for UDP-N-acetyl-alpha-D-glucosamine. Catalysis depends on Cys-121, which acts as the Proton donor. Cys-121 bears the 2-(S-cysteinyl)pyruvic acid O-phosphothioketal mark. Residues Arg-126 to Leu-130, Asp-314, and Val-336 contribute to the UDP-N-acetyl-alpha-D-glucosamine site.

It belongs to the EPSP synthase family. MurA subfamily.

The protein localises to the cytoplasm. It carries out the reaction phosphoenolpyruvate + UDP-N-acetyl-alpha-D-glucosamine = UDP-N-acetyl-3-O-(1-carboxyvinyl)-alpha-D-glucosamine + phosphate. It functions in the pathway cell wall biogenesis; peptidoglycan biosynthesis. Functionally, cell wall formation. Adds enolpyruvyl to UDP-N-acetylglucosamine. This Nostoc sp. (strain PCC 7120 / SAG 25.82 / UTEX 2576) protein is UDP-N-acetylglucosamine 1-carboxyvinyltransferase.